Reading from the N-terminus, the 208-residue chain is Platelet glycoprotein Ib beta chain (208 aa).

Residues 1-26 form the signal peptide; sequence MGSGPRGAVSLLLLMLAPPSCPAADC. 2 disulfide bridges follow: cysteine 26-cysteine 32 and cysteine 30-cysteine 39. In terms of domain architecture, LRRNT spans 27–55; sequence PAPCSCAGTLVDCGRRGLTWASLPTSFPV. Residues 27–147 are Extracellular-facing; that stretch reads PAPCSCAGTL…RAACAPGPLC (121 aa). An LRR repeat occupies 60–83; it reads LVLTGNNLTALPSGLLDALPAVRT. N-linked (GlcNAc...) asparagine glycosylation is present at asparagine 66. Residues 89-143 enclose the LRRCT domain; the sequence is NPWRCDCRLVPLRAWLAGRPERAPYRDLRCVAPPAVRGRLLPYLAEDDVRAACAP. 2 disulfide bridges follow: cysteine 93–cysteine 118 and cysteine 95–cysteine 141. A helical transmembrane segment spans residues 148–172; the sequence is WGALAAELALLGLGLLHALLLVLLL. Topologically, residues 173 to 208 are cytoplasmic; the sequence is CRLRRLRARARARARAALRLSLTDPLVAEQDGTDES. The residue at position 193 (serine 193) is a Phosphoserine; by PKA. Phosphothreonine is present on threonine 195.

In terms of assembly, two GP-Ib beta are disulfide-linked to one GP-Ib alpha. GP-IX is complexed with the GP-Ib heterodimer via a non covalent linkage. Interacts with TRAF4.

It is found in the membrane. Gp-Ib, a surface membrane protein of platelets, participates in the formation of platelet plugs by binding to von Willebrand factor, which is already bound to the subendothelium. The protein is Platelet glycoprotein Ib beta chain (GP1BB) of Papio cynocephalus (Yellow baboon).